The sequence spans 241 residues: Ribose-5-phosphate isomerase A (241 aa).

Residues 29-32 (TGTT), 84-87 (DGAD), and 97-100 (KGGG) each bind substrate. Catalysis depends on Glu106, which acts as the Proton acceptor. Lys124 contacts substrate.

It belongs to the ribose 5-phosphate isomerase family. In terms of assembly, homodimer.

It catalyses the reaction aldehydo-D-ribose 5-phosphate = D-ribulose 5-phosphate. Its pathway is carbohydrate degradation; pentose phosphate pathway; D-ribose 5-phosphate from D-ribulose 5-phosphate (non-oxidative stage): step 1/1. Functionally, catalyzes the reversible conversion of ribose-5-phosphate to ribulose 5-phosphate. The polypeptide is Ribose-5-phosphate isomerase A (Thermoplasma volcanium (strain ATCC 51530 / DSM 4299 / JCM 9571 / NBRC 15438 / GSS1)).